The chain runs to 402 residues: Cysteine-rich venom protein (402 aa).

An N-terminal signal peptide occupies residues 1-13; that stretch reads MNLALFIIFATIF. In terms of domain architecture, SCP spans 57-199; the sequence is LETHNQLRNK…VKKVLYTCNY (143 aa).

Belongs to the CRISP family. In terms of processing, contains 7 disulfide bonds. Expressed by the venom gland.

Its subcellular location is the secreted. This Tityus serrulatus (Brazilian scorpion) protein is Cysteine-rich venom protein.